The sequence spans 474 residues: Aromatic amino acid aminotransferase C56E4.03 (474 aa).

It belongs to the class-I pyridoxal-phosphate-dependent aminotransferase family. It depends on pyridoxal 5'-phosphate as a cofactor.

Its subcellular location is the cytoplasm. It catalyses the reaction an aromatic L-alpha-amino acid + 2-oxoglutarate = an aromatic oxo-acid + L-glutamate. Has aromatic amino acid transaminase activity. This chain is Aromatic amino acid aminotransferase C56E4.03, found in Schizosaccharomyces pombe (strain 972 / ATCC 24843) (Fission yeast).